The primary structure comprises 144 residues: Large ribosomal subunit protein uL15 (144 aa).

Positions 1-18 (MRLNDLHPAEGSRPEGKR) are enriched in basic and acidic residues. The disordered stretch occupies residues 1-58 (MRLNDLHPAEGSRPEGKRVGRGIGSGLGKTGGRGHKGQKSRSGGSVKPGFEGGQMPLQ). Positions 21–31 (RGIGSGLGKTG) are enriched in gly residues.

Belongs to the universal ribosomal protein uL15 family. As to quaternary structure, part of the 50S ribosomal subunit.

Functionally, binds to the 23S rRNA. This is Large ribosomal subunit protein uL15 from Alcanivorax borkumensis (strain ATCC 700651 / DSM 11573 / NCIMB 13689 / SK2).